Here is a 102-residue protein sequence, read N- to C-terminus: Small ribosomal subunit protein uS14 (102 aa).

The protein belongs to the universal ribosomal protein uS14 family. In terms of assembly, part of the 30S ribosomal subunit. Contacts proteins S3 and S10.

Its function is as follows. Binds 16S rRNA, required for the assembly of 30S particles and may also be responsible for determining the conformation of the 16S rRNA at the A site. This Wolbachia pipientis subsp. Culex pipiens (strain wPip) protein is Small ribosomal subunit protein uS14.